Reading from the N-terminus, the 344-residue chain is N-lysine methyltransferase KMT5A-A (344 aa).

The tract at residues 143–176 (TSSKHRKPARRKVKRSTKRAAESKSPANRKVTDY) is disordered. Residues 145 to 160 (SKHRKPARRKVKRSTK) show a composition bias toward basic residues. Residues 208–329 (DGMMVRFIEG…EGEELLYDYG (122 aa)) form the SET domain. S-adenosyl-L-methionine is bound by residues 218–220 (KGR), Tyr-263, and 290–291 (NH).

The protein belongs to the class V-like SAM-binding methyltransferase superfamily. Histone-lysine methyltransferase family. PR/SET subfamily.

The protein localises to the nucleus. Its subcellular location is the chromosome. It catalyses the reaction L-lysyl(20)-[histone H4] + S-adenosyl-L-methionine = N(6)-methyl-L-lysyl(20)-[histone H4] + S-adenosyl-L-homocysteine + H(+). The enzyme catalyses L-lysyl-[protein] + S-adenosyl-L-methionine = N(6)-methyl-L-lysyl-[protein] + S-adenosyl-L-homocysteine + H(+). In terms of biological role, protein-lysine N-methyltransferase that monomethylates both histones and non-histone proteins. Specifically monomethylates 'Lys-20' of histone H4 (H4K20me1). H4K20me1 is enriched during mitosis and represents a specific tag for epigenetic transcriptional repression. Mainly functions in euchromatin regions, thereby playing a central role in the silencing of euchromatic genes. Required for cell proliferation, probably by contributing to the maintenance of proper higher-order structure of DNA during mitosis. Involved in chromosome condensation and proper cytokinesis. In Danio rerio (Zebrafish), this protein is N-lysine methyltransferase KMT5A-A.